A 598-amino-acid chain; its full sequence is Glutamine--fructose-6-phosphate aminotransferase [isomerizing] (598 aa).

The Nucleophile; for GATase activity role is filled by Cys2. The 218-residue stretch at 2 to 219 (CGIIGYIGPR…DGEYGIVSKD (218 aa)) folds into the Glutamine amidotransferase type-2 domain. 2 consecutive SIS domains span residues 280–420 (VAEL…LVGI) and 449–588 (IAVK…PDRP). Lys593 acts as the For Fru-6P isomerization activity in catalysis.

In terms of assembly, homodimer.

It is found in the cytoplasm. The enzyme catalyses D-fructose 6-phosphate + L-glutamine = D-glucosamine 6-phosphate + L-glutamate. Its function is as follows. Catalyzes the first step in hexosamine metabolism, converting fructose-6P into glucosamine-6P using glutamine as a nitrogen source. The sequence is that of Glutamine--fructose-6-phosphate aminotransferase [isomerizing] from Pyrococcus horikoshii (strain ATCC 700860 / DSM 12428 / JCM 9974 / NBRC 100139 / OT-3).